Consider the following 337-residue polypeptide: Nodulation protein D 2 (337 aa).

The 58-residue stretch at 6–63 (LDLNLLVVLDSLMTARNLTAAARSINLSQPAMSAAVARLRAYFGDELFTMRGRTLVPT) folds into the HTH lysR-type domain. A DNA-binding region (H-T-H motif) is located at residues 23-42 (LTAAARSINLSQPAMSAAVA).

It belongs to the LysR transcriptional regulatory family.

Functionally, nodD regulates the expression of the nodABCFE genes which encode other nodulation proteins. NodD is also a negative regulator of its own expression. Binds flavonoids as inducers. The protein is Nodulation protein D 2 (nodD2) of Bradyrhizobium sp. (strain NC92).